The following is a 114-amino-acid chain: Non-specific lipid-transfer protein 1 (114 aa).

An N-terminal signal peptide occupies residues 1–25 (MIKGLAITVVAVLAVVQLLARPSDA). Cystine bridges form between Cys29/Cys76, Cys39/Cys53, Cys54/Cys99, and Cys74/Cys113.

The protein belongs to the plant LTP family. Expressed in seeds and, at very low levels, in pulp of fruit (at protein level).

Plant non-specific lipid-transfer proteins transfer phospholipids as well as galactolipids across membranes. May play a role in wax or cutin deposition in the cell walls of expanding epidermal cells and certain secretory tissues. The sequence is that of Non-specific lipid-transfer protein 1 from Actinidia chinensis var. chinensis (Chinese soft-hair kiwi).